Consider the following 439-residue polypeptide: Lipid-A-disaccharide synthase (439 aa).

The protein belongs to the LpxB family.

It carries out the reaction a lipid X + a UDP-2-N,3-O-bis[(3R)-3-hydroxyacyl]-alpha-D-glucosamine = a lipid A disaccharide + UDP + H(+). The protein operates within bacterial outer membrane biogenesis; LPS lipid A biosynthesis. In terms of biological role, condensation of UDP-2,3-diacylglucosamine and 2,3-diacylglucosamine-1-phosphate to form lipid A disaccharide, a precursor of lipid A, a phosphorylated glycolipid that anchors the lipopolysaccharide to the outer membrane of the cell. This is Lipid-A-disaccharide synthase from Xanthomonas axonopodis pv. citri (strain 306).